Consider the following 132-residue polypeptide: Small ribosomal subunit protein uS8c (132 aa).

It belongs to the universal ribosomal protein uS8 family. As to quaternary structure, part of the 30S ribosomal subunit.

It localises to the plastid. The protein resides in the chloroplast. Its function is as follows. One of the primary rRNA binding proteins, it binds directly to 16S rRNA central domain where it helps coordinate assembly of the platform of the 30S subunit. This Chaetosphaeridium globosum (Charophycean green alga) protein is Small ribosomal subunit protein uS8c (rps8).